The sequence spans 427 residues: Serine hydroxymethyltransferase (427 aa).

(6S)-5,6,7,8-tetrahydrofolate is bound by residues leucine 118 and 122 to 124; that span reads GHL. The residue at position 227 (lysine 227) is an N6-(pyridoxal phosphate)lysine. 351–353 serves as a coordination point for (6S)-5,6,7,8-tetrahydrofolate; sequence SPF.

It belongs to the SHMT family. As to quaternary structure, homodimer. Pyridoxal 5'-phosphate is required as a cofactor.

It is found in the cytoplasm. The catalysed reaction is (6R)-5,10-methylene-5,6,7,8-tetrahydrofolate + glycine + H2O = (6S)-5,6,7,8-tetrahydrofolate + L-serine. It participates in one-carbon metabolism; tetrahydrofolate interconversion. Its pathway is amino-acid biosynthesis; glycine biosynthesis; glycine from L-serine: step 1/1. Catalyzes the reversible interconversion of serine and glycine with tetrahydrofolate (THF) serving as the one-carbon carrier. This reaction serves as the major source of one-carbon groups required for the biosynthesis of purines, thymidylate, methionine, and other important biomolecules. Also exhibits THF-independent aldolase activity toward beta-hydroxyamino acids, producing glycine and aldehydes, via a retro-aldol mechanism. This chain is Serine hydroxymethyltransferase, found in Thermotoga petrophila (strain ATCC BAA-488 / DSM 13995 / JCM 10881 / RKU-1).